The chain runs to 921 residues: Isoleucine--tRNA ligase (921 aa).

The 'HIGH' region motif lies at 57-67 (PYANGDIHMGH). E552 lines the L-isoleucyl-5'-AMP pocket. The 'KMSKS' region signature appears at 593-597 (KMSKS). K596 lines the ATP pocket. Residues C888, C891, C908, and C911 each coordinate Zn(2+).

The protein belongs to the class-I aminoacyl-tRNA synthetase family. IleS type 1 subfamily. Monomer. Zn(2+) is required as a cofactor.

It localises to the cytoplasm. The catalysed reaction is tRNA(Ile) + L-isoleucine + ATP = L-isoleucyl-tRNA(Ile) + AMP + diphosphate. Functionally, catalyzes the attachment of isoleucine to tRNA(Ile). As IleRS can inadvertently accommodate and process structurally similar amino acids such as valine, to avoid such errors it has two additional distinct tRNA(Ile)-dependent editing activities. One activity is designated as 'pretransfer' editing and involves the hydrolysis of activated Val-AMP. The other activity is designated 'posttransfer' editing and involves deacylation of mischarged Val-tRNA(Ile). This is Isoleucine--tRNA ligase from Bacillus mycoides (strain KBAB4) (Bacillus weihenstephanensis).